The chain runs to 378 residues: Erythronate-4-phosphate dehydrogenase (378 aa).

2 residues coordinate substrate: S45 and T66. Residues D146 and T175 each coordinate NAD(+). R208 is a catalytic residue. Position 232 (D232) interacts with NAD(+). Residue E237 is part of the active site. H254 serves as the catalytic Proton donor. Residue G257 coordinates NAD(+). Y258 contributes to the substrate binding site.

The protein belongs to the D-isomer specific 2-hydroxyacid dehydrogenase family. PdxB subfamily. As to quaternary structure, homodimer.

The protein localises to the cytoplasm. It carries out the reaction 4-phospho-D-erythronate + NAD(+) = (R)-3-hydroxy-2-oxo-4-phosphooxybutanoate + NADH + H(+). Its pathway is cofactor biosynthesis; pyridoxine 5'-phosphate biosynthesis; pyridoxine 5'-phosphate from D-erythrose 4-phosphate: step 2/5. Catalyzes the oxidation of erythronate-4-phosphate to 3-hydroxy-2-oxo-4-phosphonooxybutanoate. This is Erythronate-4-phosphate dehydrogenase from Pectobacterium carotovorum subsp. carotovorum (strain PC1).